The chain runs to 146 residues: Snaclec rhodocytin subunit beta (146 aa).

A signal peptide spans 1–23; sequence MGRFIFVSFGLLVVFLSLSGTGA. 3 cysteine pairs are disulfide-bonded: Cys-25-Cys-36, Cys-53-Cys-142, and Cys-119-Cys-134. The 112-residue stretch at 32–143 folds into the C-type lectin domain; the sequence is YEGHCYKPFN…CSSTCSFVCK (112 aa).

The protein belongs to the snaclec family. As to quaternary structure, dimer (non-covalently linked) of heterodimers of subunits alpha and beta (disulfide-linked). Expressed by the venom gland.

The protein resides in the secreted. Functionally, elicits platelet aggregation by the binding to the C-type lectin domain family 1 member B (CLEC1B/CLEC2). Binding leads to tyrosine phosphorylation in the cytoplasmic tail of CLEC1B, which promotes the binding of spleen tyrosine kinase (Syk), subsequent activation of PLCgamma2, and platelet activation and aggregation. Binding to GPIbalpha (GP1BA) and alpha2/beta-1 (ITGA2/ITGB1) may also induce aggregation, but this is controversial. In Calloselasma rhodostoma (Malayan pit viper), this protein is Snaclec rhodocytin subunit beta.